Reading from the N-terminus, the 318-residue chain is Olfactory receptor-like protein COR1 (318 aa).

The Extracellular portion of the chain corresponds to M1–P26. Residue N5 is glycosylated (N-linked (GlcNAc...) asparagine). The chain crosses the membrane as a helical span at residues L27–I49. Residues S50 to T57 are Cytoplasmic-facing. A helical transmembrane segment spans residues P58 to P79. Residues K80–Q100 lie on the Extracellular side of the membrane. Cysteines 97 and 179 form a disulfide. A helical membrane pass occupies residues Y101–Y120. Residues D121–A139 are Cytoplasmic-facing. A helical transmembrane segment spans residues V140 to L164. Over K165–L205 the chain is Extracellular. Residues F206–V226 traverse the membrane as a helical segment. Over M227–S239 the chain is Cytoplasmic. The chain crosses the membrane as a helical span at residues T240 to L260. Over R261 to D271 the chain is Extracellular. The chain crosses the membrane as a helical span at residues K272–W292. The Cytoplasmic portion of the chain corresponds to R293–Q318.

This sequence belongs to the G-protein coupled receptor 1 family.

The protein localises to the cell membrane. Odorant receptor. This Gallus gallus (Chicken) protein is Olfactory receptor-like protein COR1 (COR1).